Consider the following 373-residue polypeptide: Peptide chain release factor 1-like, mitochondrial (373 aa).

Residues 1–25 (MRSGFLSGARRLWARRAFSRTPPPS) constitute a mitochondrion transit peptide. The stretch at 56–110 (QLAAAARLLSEKERELRDTESLLHDENEDLKKLAESEIALCQKQITELKHQIISL) forms a coiled coil. A GGQ domain region spans residues 229–293 (PKDLRIDTKR…LRARLYSMHL (65 aa)). The GGQ motif lies at 243–245 (GGQ). Position 245 is an N5-methylglutamine (Gln-245).

Belongs to the prokaryotic/mitochondrial release factor family. In terms of processing, methylation of glutamine in the GGQ triplet by HEMK1 is conserved from bacteria to mammals.

Its subcellular location is the mitochondrion. Functionally, mitochondrial peptide chain release factor that directs the termination of translation in response to the peptide chain termination codons UAA and UAG. This Mus musculus (Mouse) protein is Peptide chain release factor 1-like, mitochondrial (Mtrf1l).